We begin with the raw amino-acid sequence, 1234 residues long: Protein Jumonji (1234 aa).

Over residues 1–11 the composition is skewed to basic residues; that stretch reads MSKERPKRNII. 4 disordered regions span residues 1–22, 68–150, 169–339, and 354–548; these read MSKE…DGIP, AKAL…LSKR, LPNS…VKYT, and RELV…GKSG. Residue S78 is modified to Phosphoserine. Residues 86-98 are compositionally biased toward low complexity; sequence SQVSSTSNDVSSS. A Nuclear localization signal motif is present at residues 104–110; it reads PSRKRPR. Positions 117–129 are enriched in polar residues; the sequence is FAQSQPNSPSTTP. Positions 141-170 are sufficient for interaction with the PRC2 complex; sequence ATQISDLSKRKPKTEDFLTFLCLRGSPALP. A compositionally biased stretch (acidic residues) spans 180-193; that stretch reads QDEEDVEEEDDETE. The segment covering 197 to 210 has biased composition (polar residues); that stretch reads ATTNNASSSCQSTP. Basic residues predominate over residues 211–221; sequence RKGKTHKHVHN. The span at 244 to 264 shows a compositional bias: basic and acidic residues; it reads KEATPGKEKHSEPRADSRREQ. Residues 265–285 show a composition bias toward low complexity; it reads ASGAQPTAASAAASSAKGLAA. Composition is skewed to polar residues over residues 304–322 and 369–384; these read SKVN…TNSA and SAVN…SSNA. K378 is subject to N6-acetyllysine. A compositionally biased stretch (basic and acidic residues) spans 418–440; that stretch reads CTKEVGGRQLREGLRNSKRRLEE. S449 is modified (phosphoserine). Basic and acidic residues-rich tracts occupy residues 482-494 and 529-544; these read VKKE…LERN and SSHK…EKGS. One can recognise a JmjN domain in the interval 555 to 596; it reads IPVLRPSAKEFHDPLIYIESVRAQVEKYGMCRVIPPPDWRPE. The ARID domain occupies 619-711; that stretch reads WGPNVQRLAC…YLLSYDSLSP (93 aa). The short motif at 872 to 876 is the GSGFP motif element; the sequence is GSGFP. The JmjC domain maps to 882–1046; sequence PFSRHGWNLT…MGFETAKEMK (165 aa). The tract at residues 1206-1234 is disordered; the sequence is ENCLNKPTPKRGPRKRATVDVPPSRLPSS.

This sequence belongs to the JARID2 family. In terms of assembly, associates with the PRC2 complex, which consists of the core components EED, EZH1 or EZH2, SUZ12, and RBBP4, and various combinations of accessory subunits including AEBP2, JARID2, PHF19, MTF2 and EPOP. Found in a monomeric PRC2.2 (class 2) complex consisting of at least SUZ12, RBBP4, AEBP2 and JARID2. Facilitates nucleosome binding of the PRC2 complex. Interacts with SUZ12 (via C2H2-type zinc finger domain); the interaction is direct; competes with EPOP for SUZ12 binding. Interacts with histone methyltransferases EHMT1/GLP1 and EHMT2/G9a. Interacts with GATA4 (via the N-terminal region). Interacts with NKX2-5 (via the C-terminal region). Interacts with RB1. Interacts with ZNF496. Interacts with ESRRB. Interacts with DDX18; this interaction inhibits the PRC2 complex. In terms of tissue distribution, widely expressed in embryos. In adults, expressed at high levels in heart, skeletal muscle, brain and thymus.

It is found in the nucleus. Functionally, regulator of histone methyltransferase complexes that plays an essential role in embryonic development, including heart and liver development, neural tube fusion process and hematopoiesis. Acts as an accessory subunit for the core PRC2 (Polycomb repressive complex 2) complex, which mediates histone H3K27 (H3K27me3) trimethylation on chromatin. Binds DNA and mediates the recruitment of the PRC2 complex to target genes in embryonic stem cells, thereby playing a key role in stem cell differentiation and normal embryonic development. In cardiac cells, it is required to repress expression of cyclin-D1 (CCND1) by activating methylation of 'Lys-9' of histone H3 (H3K9me) by the GLP1/EHMT1 and G9a/EHMT2 histone methyltransferases. Also acts as a transcriptional repressor of ANF via its interaction with GATA4 and NKX2-5. Participates in the negative regulation of cell proliferation signaling. Does not have histone demethylase activity. The protein is Protein Jumonji (Jarid2) of Mus musculus (Mouse).